The following is a 468-amino-acid chain: MRGSPGDAERRQRWGRLFEELDSNKDGRVDVHELRQGLARLGGGNPDPGAQQGISSEGDADPDGGLDLEEFSRYLQEREQRLLLMFHSLDRNQDGHIDVSEIQQSFRALGISISLEQAEKILHSMDRDGTMTIDWQEWRDHFLLHSLENVEDVLYFWKHSTVLDIGECLTVPDEFSKQEKLTGMWWKQLVAGAVAGAVSRTGTAPLDRLKVFMQVHASKTNRLNILGGLRSMVLEGGIRSLWRGNGINVLKIAPESAIKFMAYEQIKRAILGQQETLHVQERFVAGSLAGATAQTIIYPMEVLKTRLTLRRTGQYKGLLDCARRILEREGPRAFYRGYLPNVLGIIPYAGIDLAVYETLKNWWLQQYSHDSADPGILVLLACGTISSTCGQIASYPLALVRTRMQAQASIEGGPQLSMLGLLRHILSQEGMRGLYRGIAPNFMKVIPAVSISYVVYENMKQALGVTSR.

The tract at residues 1 to 149 is regulatory N-terminal domain; the sequence is MRGSPGDAER…DHFLLHSLEN (149 aa). The Mitochondrial intermembrane portion of the chain corresponds to 1 to 188; the sequence is MRGSPGDAER…EKLTGMWWKQ (188 aa). The EF-hand 1 domain occupies 9–44; sequence ERRQRWGRLFEELDSNKDGRVDVHELRQGLARLGGG. Aspartate 22, asparagine 24, aspartate 26, arginine 28, and glutamate 33 together coordinate Ca(2+). Residues 34-67 form a disordered region; that stretch reads LRQGLARLGGGNPDPGAQQGISSEGDADPDGGLD. Residues 58 to 67 show a composition bias toward acidic residues; it reads GDADPDGGLD. EF-hand domains lie at 77–112 and 113–148; these read EREQRLLLMFHSLDRNQDGHIDVSEIQQSFRALGIS and ISLEQAEKILHSMDRDGTMTIDWQEWRDHFLLHSLE. Ca(2+) is bound by residues aspartate 90, asparagine 92, aspartate 94, histidine 96, and glutamate 101. Residues 150 to 159 are linker region; sequence VEDVLYFWKH. Residues 165–468 are C-terminal transmembrane transporter domain; the sequence is IGECLTVPDE…MKQALGVTSR (304 aa). 3 Solcar repeats span residues 183-269, 277-362, and 374-462; these read GMWW…IKRA, LHVQ…LKNW, and PGIL…MKQA. The chain crosses the membrane as a helical span at residues 189–206; that stretch reads LVAGAVAGAVSRTGTAPL. Residues 207-243 are Mitochondrial matrix-facing; the sequence is DRLKVFMQVHASKTNRLNILGGLRSMVLEGGIRSLWR. The chain crosses the membrane as a helical span at residues 244–263; sequence GNGINVLKIAPESAIKFMAY. Over 264-286 the chain is Mitochondrial intermembrane; the sequence is EQIKRAILGQQETLHVQERFVAG. A helical transmembrane segment spans residues 287-300; that stretch reads SLAGATAQTIIYPM. Residues 301–336 are Mitochondrial matrix-facing; it reads EVLKTRLTLRRTGQYKGLLDCARRILEREGPRAFYR. The helical transmembrane segment at 337 to 356 threads the bilayer; it reads GYLPNVLGIIPYAGIDLAVY. Over 357-379 the chain is Mitochondrial intermembrane; sequence ETLKNWWLQQYSHDSADPGILVL. The chain crosses the membrane as a helical span at residues 380 to 397; it reads LACGTISSTCGQIASYPL. Residues 398–436 are Mitochondrial matrix-facing; that stretch reads ALVRTRMQAQASIEGGPQLSMLGLLRHILSQEGMRGLYR. The helical transmembrane segment at 437–456 threads the bilayer; the sequence is GIAPNFMKVIPAVSISYVVY. The Mitochondrial intermembrane portion of the chain corresponds to 457-468; it reads ENMKQALGVTSR.

This sequence belongs to the mitochondrial carrier (TC 2.A.29) family. Interacts with MCU. Interacts with MICU1. As to expression, expressed at low levels in most tissues examined, with highest expression in brain, skeletal muscle and pancreas.

The protein localises to the mitochondrion inner membrane. It catalyses the reaction Mg(2+)(out) + phosphate(in) + ATP(out) = Mg(2+)(in) + phosphate(out) + ATP(in). The catalysed reaction is ADP(out) + phosphate(in) + H(+)(out) = ADP(in) + phosphate(out) + H(+)(in). The enzyme catalyses AMP(out) + phosphate(in) = AMP(in) + phosphate(out). It carries out the reaction phosphate(in) + ATP(out) + 2 H(+)(out) = phosphate(out) + ATP(in) + 2 H(+)(in). It catalyses the reaction dADP(in) + ADP(out) = dADP(out) + ADP(in). The catalysed reaction is Mg(2+)(in) + ADP(out) + ATP(in) + H(+)(out) = Mg(2+)(out) + ADP(in) + ATP(out) + H(+)(in). The enzyme catalyses ADP(out) + diphosphate(in) = ADP(in) + diphosphate(out). It carries out the reaction dAMP(in) + ADP(out) + H(+)(out) = dAMP(out) + ADP(in) + H(+)(in). It catalyses the reaction 3'-AMP(in) + ADP(out) + H(+)(out) = 3'-AMP(out) + ADP(in) + H(+)(in). The catalysed reaction is dAMP(out) + phosphate(in) = dAMP(in) + phosphate(out). The enzyme catalyses 3'-AMP(out) + phosphate(in) = 3'-AMP(in) + phosphate(out). It carries out the reaction dADP(out) + phosphate(in) + H(+)(out) = dADP(in) + phosphate(out) + H(+)(in). Its activity is regulated as follows. Activated by an increase in cytosolic calcium levels that induce a conformational change of the N-terminal regulatory domain, uncapping the channel and allowing transport. Inhibited by bathophenanthroline, mersalyl, p-hydroxymercuribenzoate, bromcresol purple, tannic acid, pyridoxal 5'-phosphate and p-hydroxymercuribenzoate. Functionally, electroneutral antiporter that mediates the transport of adenine nucleotides through the inner mitochondrial membrane. Originally identified as an ATP-magnesium/inorganic phosphate antiporter, it also acts as a broad specificity adenyl nucleotide antiporter. By regulating the mitochondrial matrix adenine nucleotide pool could adapt to changing cellular energetic demands and indirectly regulate adenine nucleotide-dependent metabolic pathways. Also acts as a regulator of mitochondrial calcium uptake and can probably transport trace amounts of other divalent metal cations in complex with ATP. In vitro, a low activity is also observed with guanyl and pyrimidine nucleotides. This is Mitochondrial adenyl nucleotide antiporter SLC25A23 from Homo sapiens (Human).